We begin with the raw amino-acid sequence, 1435 residues long: Protein clueless (1435 aa).

The interval 1 to 97 (MALEMDSKNS…KPEGDGDADA (97 aa)) is disordered. The span at 18–35 (AAAATTKTNKAKENNNLA) shows a compositional bias: low complexity. Residues 38 to 50 (KKNQSQNLVNGNG) are compositionally biased toward polar residues. Over residues 58 to 67 (TKKKGKKNRN) the composition is skewed to basic residues. Position 266 is a phosphoserine (serine 266). The region spanning 420–662 (RAEDAFSSKL…RTFPPDVNFL (243 aa)) is the Clu domain. 2 stretches are compositionally biased toward basic and acidic residues: residues 719–731 (KKPEETQSEEKKQ) and 752–762 (PNEKEKDTPVE). Disordered regions lie at residues 719 to 762 (KKPE…TPVE) and 952 to 998 (VSND…SSSS). Residues 959–975 (KKRGGNGGKHNKHKSSK) show a composition bias toward basic residues. A compositionally biased stretch (low complexity) spans 988–998 (NGGSTTSSSSS). TPR repeat units lie at residues 1096–1129 (AYNFYTTGQAKIQQGLFKEGYELISEALNLLNNV), 1222–1255 (ALIDSNISLILHALGEYELSLRFIEHALKLNLKY), and 1257–1290 (GNKAMHVAVSYHLMARTQSCMGDFRSALNNEKET). A disordered region spans residues 1407–1435 (EVLAPQDNNKEQAATAQQLTNGDKVAVSS). Positions 1417-1435 (EQAATAQQLTNGDKVAVSS) are enriched in polar residues.

It belongs to the CLU family.

The protein resides in the cytoplasm. In terms of biological role, mRNA-binding protein involved in proper cytoplasmic distribution of mitochondria. This chain is Protein clueless, found in Drosophila persimilis (Fruit fly).